Reading from the N-terminus, the 418-residue chain is Probable aminotransferase Rv1178 (418 aa).

Residues 22 to 42 form a disordered region; sequence GQGWHDRERPASGQGSGAAER.

This sequence belongs to the class-I pyridoxal-phosphate-dependent aminotransferase family. Pyridoxal 5'-phosphate serves as cofactor.

The chain is Probable aminotransferase Rv1178 from Mycobacterium tuberculosis (strain ATCC 25618 / H37Rv).